Reading from the N-terminus, the 507-residue chain is RNA-splicing ligase RtcB homolog (507 aa).

Mn(2+) contacts are provided by Asp-121, Cys-124, His-229, His-261, and His-355. Position 228-232 (228-232 (NHYAE)) interacts with GMP. Residues 355 to 356 (HN), 404 to 407 (GGTM), Ser-411, 430 to 433 (HGAG), and Lys-506 each bind GMP. The active-site GMP-histidine intermediate is His-430.

It belongs to the RtcB family. Catalytic component of the tRNA-splicing ligase complex. Mn(2+) serves as cofactor.

It catalyses the reaction a 3'-end 3'-phospho-ribonucleotide-RNA + a 5'-end dephospho-ribonucleoside-RNA + GTP = a ribonucleotidyl-ribonucleotide-RNA + GMP + diphosphate. The enzyme catalyses a 3'-end 2',3'-cyclophospho-ribonucleotide-RNA + a 5'-end dephospho-ribonucleoside-RNA + GTP + H2O = a ribonucleotidyl-ribonucleotide-RNA + GMP + diphosphate + H(+). In terms of biological role, catalytic subunit of the tRNA-splicing ligase complex that acts by directly joining spliced tRNA halves to mature-sized tRNAs by incorporating the precursor-derived splice junction phosphate into the mature tRNA as a canonical 3',5'-phosphodiester. May act as an RNA ligase with broad substrate specificity, and may function toward other RNAs. This is RNA-splicing ligase RtcB homolog from Micromonas pusilla (strain CCMP1545) (Picoplanktonic green alga).